The chain runs to 135 residues: Small ribosomal subunit protein bS6 (135 aa).

The disordered stretch occupies residues 98 to 135 (EASPMAKAKDERDARRAAISERSSEADEVEENAEESAE). Over residues 104–122 (KAKDERDARRAAISERSSE) the composition is skewed to basic and acidic residues. Positions 123–135 (ADEVEENAEESAE) are enriched in acidic residues.

Belongs to the bacterial ribosomal protein bS6 family.

Its function is as follows. Binds together with bS18 to 16S ribosomal RNA. This chain is Small ribosomal subunit protein bS6, found in Shewanella amazonensis (strain ATCC BAA-1098 / SB2B).